A 614-amino-acid polypeptide reads, in one-letter code: Afadin- and alpha-actinin-binding protein (614 aa).

Coiled coils occupy residues 131–227 (MDHL…IAMD) and 266–293 (RQKQ…SLLS). Ser290, Ser293, and Ser312 each carry phosphoserine. The tract at residues 292-317 (LSPQKKKPRERVDDSTGTVISDVEED) is disordered. Residues 374–460 (ISRQDHEQET…RSFTEAAIRL (87 aa)) adopt a coiled-coil conformation. Ser536, Ser540, and Ser542 each carry phosphoserine.

It belongs to the ADIP family. As to quaternary structure, interacts with afadin and alpha-actinin. Interacts with VAV2. Interacts with SSX2 and SSX3. Does not interact with SSX1 and SSX4. Interacts with PCM1. Interacts with WRAP73. As to expression, widely expressed, with the highest expression in brain, intermediate expression in kidney, testis, spinal cord, liver, heart, lung, skeletal muscle, ovary, fetal liver and fetal brain, and little to no expression in pancreas and spleen. All specific brain regions showed intermediate to high expression, with highest expression in amygdala. Also expressed in fetal tissues, mainly in liver and brain.

The protein localises to the cell junction. Its subcellular location is the adherens junction. It is found in the nucleus. The protein resides in the cytoplasm. It localises to the cytoskeleton. The protein localises to the microtubule organizing center. Its subcellular location is the centrosome. It is found in the centriolar satellite. The protein resides in the cilium basal body. Belongs to an adhesion system, which plays a role in the organization of homotypic, interneuronal and heterotypic cell-cell adherens junctions (AJs). May connect the nectin-afadin and E-cadherin-catenin system through alpha-actinin and may be involved in organization of the actin cytoskeleton at AJs through afadin and alpha-actinin. Involved in cell movement: localizes at the leading edge of moving cells in response to PDGF and is required for the formation of the leading edge and the promotion of cell movement, possibly via activation of Rac signaling. Acts as a centrosome maturation factor, probably by maintaining the integrity of the pericentriolar material and proper microtubule nucleation at mitotic spindle poles. The function seems to implicate at least in part WRAP73; the SSX2IP:WRAP73 complex is proposed to act as regulator of spindle anchoring at the mitotic centrosome. Involved in ciliogenesis. It is required for targeted recruitment of the BBSome, CEP290, RAB8, and SSTR3 to the cilia. The polypeptide is Afadin- and alpha-actinin-binding protein (SSX2IP) (Homo sapiens (Human)).